The sequence spans 1063 residues: MASTTPITMEDLQKALEAQSRALRAELAAGASQPRRPRPPRQRDSSTSGDDSGRDSGGPRRRRGNRGRGQRKDWSRAPPPPEERQEGRSQTPAPKPSRAPPQQPQPPRMQTGRGGSAPRPELGPPTNPFQAAVARGLRPPLHDPDTEAPTEACVTSWLWSEGEGAVFYRVDLHFTNLGTPPLDEDGRWDPALMYNPCGPEPPAHVVRAYNQPAGDVRGVWGKGERTYAEQDFRVGGTRWHRLLRMPVRGLDGDSAPLPPHTTERIETRSARHPWRIRFGAPQAFLAGLLLAAVAVGTARAGLQPRVDMAAPPTPPQPPRAHGQHYGHHHHQLPFLGHDGHHGGTLRVGQHHRNASDVLPGHWLQGGWGCYNLSDWHQGTHVCHTKHMDFWCVEHDRPPPATPTPLTTAANSITAATPATAPAPCHAGLNDSCGGFLSGCGPMRLRHGADTRCGRLICGLSTTAQYPPTRFGCAMRWGLPPWELVVLTARPEDGWTCRGVPAHPGTRCPELVSPMGRATCSPASALWLATANALSLDHALAAFVLLVPWVLIFMVCRRACRRRGAAAALTAVVLQGYNPPAYGEEAFTYLCTAPGCATQTPVPVRLAGVRFESKIVDGGCFAPWDLEATGACICEIPTDVSCEGLGAWVPTAPCARIWNGTQRACTFWAVNAYSSGGYAQLASYFNPGGSYYKQYHPTACEVEPAFGHSDAACWGFPTDTVMSVFALASYVQHPHKTVRVKFHTETRTVWQLSVAGVSCDVTTEHPFCNTPHGQLEVQVPPDPGDMVEYIMNYTGNQQSRWGLGSPNCHGPDWASPVCQRHSPDCSRLVGATPERPRLRLVDADDPLLRTAPGPGEVWVTPVIGSQARKCGLHIRAGPYGHATVEMPEWIHAHTTSDPWHPPGPLGLKFKTVRPVTLPRALAPPRNVRVTGCYQCGTPALVEGLAPGGGNCHLTVNGEDVGAFPPGKFVTAALLNTPPPYQVSCGGESDRASARVIDPAAQSFTGVVYGTHTTAVSETRQTWAEWAAAHWWQLTLGAICALPLAGLLACCAKCLYYLRGAIAPR.

Positions methionine 1–alanine 131 are disordered. Positions glycine 30–glycine 69 are human C1QBP/SF2P32-binding. Serine 46 carries the phosphoserine; by host modification. A compositionally biased stretch (basic residues) spans proline 59–glycine 69. A compositionally biased stretch (basic and acidic residues) spans glutamine 70–glycine 87. Residues alanine 93 to proline 107 show a composition bias toward pro residues. Cysteine 153 and cysteine 197 are oxidised to a cystine. The segment at glycine 279–alanine 300 is functions as E2 signal peptide. Over glycine 301–serine 534 the chain is Extracellular. 3 N-linked (GlcNAc...) asparagine; by host glycosylation sites follow: asparagine 353, asparagine 371, and asparagine 429. Residues leucine 535–cysteine 555 traverse the membrane as a helical segment. Residues arginine 556–glycine 582 lie on the Cytoplasmic side of the membrane. Positions glycine 563–glycine 582 are functions as E1 signal peptide. At glutamate 583–histidine 1028 the chain is on the extracellular side. Disulfide bonds link cysteine 590–cysteine 595, cysteine 619–cysteine 824, cysteine 641–cysteine 653, cysteine 699–cysteine 712, cysteine 758–cysteine 767, cysteine 807–cysteine 817, cysteine 931–cysteine 934, and cysteine 950–cysteine 983. Asparagine 658 carries an N-linked (GlcNAc...) asparagine; by host glycan. Ca(2+) is bound by residues asparagine 670 and alanine 671. The Ca(2+) site is built by aspartate 718 and threonine 719. A glycan (N-linked (GlcNAc...) asparagine; by host) is linked at asparagine 791. O-linked (GalNAc...) threonine; by host glycans are attached at residues threonine 1011 and threonine 1012. Residues tryptophan 1029–cysteine 1049 traverse the membrane as a helical segment. Topologically, residues alanine 1050 to arginine 1063 are extracellular.

Homodimer; further assembles into homooligomer. Interacts with human C1QBP. Interacts (via N-terminus) with protease/methyltransferase p150. In terms of assembly, heterodimer with spike glycoprotein E2. As to quaternary structure, heterodimer with spike glycoprotein E1. Structural polyprotein: Specific enzymatic cleavages in vivo yield mature proteins. Two signal peptidase-mediated cleavages within the polyprotein produce the structural proteins capsid, E2, and E1. The E2 signal peptide remains attached to the C-terminus of the capsid protein after cleavage by the signal peptidase. Another signal peptide at E2 C-terminus directs E1 to the ER, with a similar mechanism. In terms of processing, contains three N-linked oligosaccharides. Post-translationally, capsid is phosphorylated on Ser-46 by host. This phosphorylation negatively regulates capsid protein RNA-binding activity. Dephosphorylated by human PP1A.

Its subcellular location is the virion. It is found in the host cytoplasm. The protein localises to the host mitochondrion. The protein resides in the virion membrane. It localises to the host Golgi apparatus membrane. Its function is as follows. Capsid protein interacts with genomic RNA and assembles into icosahedric core particles 65-70 nm in diameter. The resulting nucleocapsid eventually associates with the cytoplasmic domain of E2 at the cell membrane, leading to budding and formation of mature virions from host Golgi membranes. Phosphorylation negatively regulates RNA-binding activity, possibly delaying virion assembly during the viral replication phase. Capsid protein dimerizes and becomes disulfide-linked in the virion. Modulates genomic RNA replication. Modulates subgenomic RNA synthesis by interacting with human C1QBP/SF2P32. Induces both perinuclear clustering of mitochondria and the formation of electron-dense intermitochondrial plaques, both hallmarks of rubella virus infected cells. Induces apoptosis when expressed in transfected cells. In terms of biological role, responsible for viral attachment to target host cell, by binding to the cell receptor. Its transport to the plasma membrane depends on interaction with E1 protein. The surface glycoproteins display an irregular helical organization and a pseudo-tetrameric inner nucleocapsid arrangement. Class II viral fusion protein. Fusion activity is inactive as long as E1 is bound to E2 in mature virion. After virus attachment to target cell and clathrin-mediated endocytosis, acidification of the endosome would induce dissociation of E1/E2 heterodimer and concomitant trimerization of the E1 subunits. This E1 homotrimer is fusion active, and promotes release of viral nucleocapsid in cytoplasm after endosome and viral membrane fusion. The cytoplasmic tail of spike glycoprotein E1 modulates virus release. The surface glycoproteins display an irregular helical organization and a pseudo-tetrameric inner nucleocapsid arrangement. In Rubella virus (strain Cendehill) (RUBV), this protein is Structural polyprotein.